Here is a 184-residue protein sequence, read N- to C-terminus: Large ribosomal subunit protein uL6 (184 aa).

It belongs to the universal ribosomal protein uL6 family. Part of the 50S ribosomal subunit.

This protein binds to the 23S rRNA, and is important in its secondary structure. It is located near the subunit interface in the base of the L7/L12 stalk, and near the tRNA binding site of the peptidyltransferase center. This chain is Large ribosomal subunit protein uL6, found in Thermosipho melanesiensis (strain DSM 12029 / CIP 104789 / BI429).